The sequence spans 144 residues: Large ribosomal subunit protein uL15 (144 aa).

Residues 1-57 (MELNNIKPADGAKKDKRRVGRGIGSGLGKTAGRGHKGQKSRAGGFHKVGFEGGQMPM) form a disordered region. Gly residues predominate over residues 21-31 (RGIGSGLGKTA).

It belongs to the universal ribosomal protein uL15 family. Part of the 50S ribosomal subunit.

Functionally, binds to the 23S rRNA. The protein is Large ribosomal subunit protein uL15 of Thiobacillus denitrificans (strain ATCC 25259 / T1).